Consider the following 351-residue polypeptide: Cytoplasmic dynein 2 light intermediate chain 1 (351 aa).

Positions 303-335 (GTLKAVQDPARDPQYAESEVDEMRVQKDQELEH) are disordered. Basic and acidic residues predominate over residues 323–335 (DEMRVQKDQELEH).

This sequence belongs to the dynein light intermediate chain family. In terms of assembly, light intermediate chain of the cytoplasmic dynein complex 2, a multisubunit complex composed at least of eleven different proteins. The cytoplasmic dynein 2 complex consists of two catalytic heavy chains (HCs) and a number of non-catalytic subunits presented by intermediate chains (ICs), light intermediate chains (LICs) and light chains (LCs). Among them, a heavy chain (DYNC2H1), two intermediate chains (DYNC2I2 and DYNC2I1), a light intermediate chain (DYNC2LI1), and a light chain (DYNLT2B) are unique to the dynein-2 complex, but a subset of light chains are also shared by dynein-1 and dynein-2 complexes. Dynein-2 complex is built around two copies of cytoplasmic dynein 2 heavy chain 1 (DYNC2H1). The C-terminal region forms the motor domain, which converts the energy from ATP hydrolysis into movement. Its N-terminal region forms the tail, an extended structure that binds the other subunits and holds the two heavy chains in a homodimer. Interacts with DYNC2H1 (via N-terminus); this interaction stabilizes the dynein-2 complex structure. As to expression, specifically expressed by ciliated cells in brain, lung, spleen, testis and kidney (at protein level). Enriched in the ependymal layer lining the lateral ventricles (at protein level).

It localises to the cytoplasm. Its subcellular location is the cell projection. The protein resides in the cilium. The protein localises to the cytoskeleton. It is found in the cilium basal body. It localises to the cilium axoneme. Its subcellular location is the microtubule organizing center. The protein resides in the centrosome. Acts as one of several non-catalytic accessory components of the cytoplasmic dynein 2 complex (dynein-2 complex), a motor protein complex that drives the movement of cargos along microtubules within cilia and flagella in concert with the intraflagellar transport (IFT) system, facilitating the assembly of these organelles. Involved in the regulation of ciliary length. The sequence is that of Cytoplasmic dynein 2 light intermediate chain 1 (Dync2li1) from Mus musculus (Mouse).